Here is a 323-residue protein sequence, read N- to C-terminus: uncharacterized protein (323 aa).

This is an uncharacterized protein from Treponema pallidum (strain Nichols).